A 162-amino-acid polypeptide reads, in one-letter code: Large ribosomal subunit protein uL10 (162 aa).

Belongs to the universal ribosomal protein uL10 family. Part of the ribosomal stalk of the 50S ribosomal subunit. The N-terminus interacts with L11 and the large rRNA to form the base of the stalk. The C-terminus forms an elongated spine to which L12 dimers bind in a sequential fashion forming a multimeric L10(L12)X complex.

Functionally, forms part of the ribosomal stalk, playing a central role in the interaction of the ribosome with GTP-bound translation factors. The sequence is that of Large ribosomal subunit protein uL10 from Borrelia garinii subsp. bavariensis (strain ATCC BAA-2496 / DSM 23469 / PBi) (Borreliella bavariensis).